We begin with the raw amino-acid sequence, 261 residues long: Sulfur carrier protein FdhD (261 aa).

Cys105 serves as the catalytic Cysteine persulfide intermediate. Residue 245–250 (FIRGDR) coordinates Mo-bis(molybdopterin guanine dinucleotide).

This sequence belongs to the FdhD family.

Its subcellular location is the cytoplasm. In terms of biological role, required for formate dehydrogenase (FDH) activity. Acts as a sulfur carrier protein that transfers sulfur from IscS to the molybdenum cofactor prior to its insertion into FDH. The polypeptide is Sulfur carrier protein FdhD (Listeria innocua serovar 6a (strain ATCC BAA-680 / CLIP 11262)).